A 333-amino-acid chain; its full sequence is L-lactate dehydrogenase A chain (333 aa).

Residues 30-58 and Arg-100 contribute to the NAD(+) site; that span reads GMVGMAAAVSILLKDLTDELALVDVMEDK. Substrate is bound by residues Arg-107, Asn-139, and Arg-170. Asn-139 provides a ligand contact to NAD(+). Residue His-194 is the Proton acceptor of the active site. Residue Thr-249 coordinates substrate.

This sequence belongs to the LDH/MDH superfamily. LDH family. As to quaternary structure, homotetramer.

The protein resides in the cytoplasm. It carries out the reaction (S)-lactate + NAD(+) = pyruvate + NADH + H(+). It participates in fermentation; pyruvate fermentation to lactate; (S)-lactate from pyruvate: step 1/1. Functionally, interconverts simultaneously and stereospecifically pyruvate and lactate with concomitant interconversion of NADH and NAD(+). This is L-lactate dehydrogenase A chain (ldha) from Danio rerio (Zebrafish).